The primary structure comprises 627 residues: DNA-directed RNA polymerase subunit gamma (627 aa).

Zn(2+) is bound by residues Cys70, Cys72, Cys85, and Cys88. Mg(2+) contacts are provided by Asp468, Asp470, and Asp472.

Belongs to the RNA polymerase beta' chain family. RpoC1 subfamily. In terms of assembly, in cyanobacteria the RNAP catalytic core is composed of 2 alpha, 1 beta, 1 beta', 1 gamma and 1 omega subunit. When a sigma factor is associated with the core the holoenzyme is formed, which can initiate transcription. Requires Mg(2+) as cofactor. Zn(2+) serves as cofactor.

The catalysed reaction is RNA(n) + a ribonucleoside 5'-triphosphate = RNA(n+1) + diphosphate. DNA-dependent RNA polymerase catalyzes the transcription of DNA into RNA using the four ribonucleoside triphosphates as substrates. In Synechococcus sp. (strain JA-2-3B'a(2-13)) (Cyanobacteria bacterium Yellowstone B-Prime), this protein is DNA-directed RNA polymerase subunit gamma.